The primary structure comprises 250 residues: Thioesterase FPSE_09186 (250 aa).

The protein belongs to the AMT4 thioesterase family.

The protein operates within secondary metabolite biosynthesis. Functionally, thioesterase; part of the gene cluster that mediates the biosynthesis of the lipopeptides W493 A and B. W493 A and B consist of six amino acid residues D-allo-thr, L-Ala, D-Ala, L-Gln, D-Tyr, and L-Val/L-Ile linked to a 3-hydroxy-4-methyltetradecanoic acid polyketide chain. The biosynthesis starts with formation of the linear polyketide chain by the highly reducing polyketide synthase PKS40. The gene cluster contains a putative acyl-CoA ligase (FPSE_09184) for formation of a CoA thioester polyketide. The thiol bond could be hydrolyzed by the putative thioesterase (FPSE_09186) and then accepted by the first T domain in module 1 of NRPS32. The second T domain is responsible for accepting a threonine, which is adenylated by the A domain and epimerized to the D-allo-threonine formed by the E domain. The five successive modules incorporate Ala, Ala, Gln, Tyr, and Val/Ile into the final product, which is released by cyclization. This Fusarium pseudograminearum (strain CS3096) (Wheat and barley crown-rot fungus) protein is Thioesterase FPSE_09186.